We begin with the raw amino-acid sequence, 105 residues long: UPF0235 protein RP839 (105 aa).

Belongs to the UPF0235 family.

In Rickettsia prowazekii (strain Madrid E), this protein is UPF0235 protein RP839.